Consider the following 100-residue polypeptide: Putative membrane protein insertion efficiency factor (100 aa).

The interval 73 to 100 is disordered; that stretch reads DPVPDLPGSAPEENGRPSPDGQHSGSGG.

It belongs to the UPF0161 family.

The protein resides in the cell inner membrane. Functionally, could be involved in insertion of integral membrane proteins into the membrane. The polypeptide is Putative membrane protein insertion efficiency factor (Synechococcus sp. (strain JA-3-3Ab) (Cyanobacteria bacterium Yellowstone A-Prime)).